Reading from the N-terminus, the 211-residue chain is Dephospho-CoA kinase (211 aa).

The 203-residue stretch at 2-204 (IIGLTGSIGM…SGVRRWRRGK (203 aa)) folds into the DPCK domain. 10–15 (GMGKST) is a binding site for ATP.

Belongs to the CoaE family.

Its subcellular location is the cytoplasm. It catalyses the reaction 3'-dephospho-CoA + ATP = ADP + CoA + H(+). It participates in cofactor biosynthesis; coenzyme A biosynthesis; CoA from (R)-pantothenate: step 5/5. Its function is as follows. Catalyzes the phosphorylation of the 3'-hydroxyl group of dephosphocoenzyme A to form coenzyme A. This Rhodospirillum rubrum (strain ATCC 11170 / ATH 1.1.1 / DSM 467 / LMG 4362 / NCIMB 8255 / S1) protein is Dephospho-CoA kinase.